A 497-amino-acid chain; its full sequence is Cytochrome P450 26A1 (497 aa).

Cys-442 contributes to the heme binding site.

It belongs to the cytochrome P450 family. Heme serves as cofactor. In terms of tissue distribution, expressed in most fetal and adult tissues with highest levels in adult liver, heart, pituitary gland, adrenal gland, placenta and regions of the brain. Expressed at high levels in lung, pancreas, skin and uterus (at protein level). Lower expression level is detected in spleen, kidney, intestine and adipose tissue (at protein level).

The protein localises to the endoplasmic reticulum membrane. The protein resides in the microsome membrane. The catalysed reaction is all-trans-retinoate + reduced [NADPH--hemoprotein reductase] + O2 = all-trans-(4S)-hydroxyretinoate + oxidized [NADPH--hemoprotein reductase] + H2O + H(+). It catalyses the reaction all-trans-(4S)-hydroxyretinoate + reduced [NADPH--hemoprotein reductase] + O2 = all-trans-(4S,16)-dihydroxyretinoate + oxidized [NADPH--hemoprotein reductase] + H2O + H(+). The enzyme catalyses all-trans-retinoate + reduced [NADPH--hemoprotein reductase] + O2 = all-trans-18-hydroxyretinoate + oxidized [NADPH--hemoprotein reductase] + H2O + H(+). In terms of biological role, a cytochrome P450 monooxygenase involved in the metabolism of retinoates (RAs), the active metabolites of vitamin A, and critical signaling molecules in animals. RAs exist as at least four different isomers: all-trans-RA (atRA), 9-cis-RA, 13-cis-RA, and 9,13-dicis-RA, where atRA is considered to be the biologically active isomer, although 9-cis-RA and 13-cis-RA also have activity. Catalyzes the hydroxylation of atRA primarily at C-4 and C-18, thereby contributing to the regulation of atRA homeostasis and signaling. Hydroxylation of atRA limits its biological activity and initiates a degradative process leading to its eventual elimination. Involved in the convertion of atRA to all-trans-4-oxo-RA. Able to metabolize other RAs such as 9-cis, 13-cis and 9,13-di-cis RA. Can oxidize all-trans-13,14-dihydroretinoate (DRA) to metabolites which could include all-trans-4-oxo-DRA, all-trans-4-hydroxy-DRA, all-trans-5,8-epoxy-DRA, and all-trans-18-hydroxy-DRA. May play a role in the oxidative metabolism of xenobiotics such as tazarotenic acid. The protein is Cytochrome P450 26A1 of Homo sapiens (Human).